The following is a 247-amino-acid chain: ATP synthase subunit a, chloroplastic (247 aa).

A run of 5 helical transmembrane segments spans residues 38–58 (QVLITSWVVIAILLGSATLAV), 95–115 (VPFIGTMFLFIFVSNWSGALL), 134–154 (INTTVALALLTSVAYFYAGLT), 199–219 (LVVVVLVSLVPSIVPIPVMFL), and 220–240 (GLFTSGIQALIFATLAAAYIG).

Belongs to the ATPase A chain family. As to quaternary structure, F-type ATPases have 2 components, CF(1) - the catalytic core - and CF(0) - the membrane proton channel. CF(1) has five subunits: alpha(3), beta(3), gamma(1), delta(1), epsilon(1). CF(0) has four main subunits: a, b, b' and c.

Its subcellular location is the plastid. It localises to the chloroplast thylakoid membrane. Key component of the proton channel; it plays a direct role in the translocation of protons across the membrane. In Vitis vinifera (Grape), this protein is ATP synthase subunit a, chloroplastic.